The sequence spans 196 residues: Guanylate kinase (196 aa).

The interval 1–24 is disordered; it reads MPVESGAGNDQPKRLTVLSGPSGV. Residues 13 to 191 enclose the Guanylate kinase-like domain; sequence KRLTVLSGPS…VCDELLALIA (179 aa). 20 to 27 serves as a coordination point for ATP; that stretch reads GPSGVGKS.

This sequence belongs to the guanylate kinase family.

It localises to the cytoplasm. The catalysed reaction is GMP + ATP = GDP + ADP. Essential for recycling GMP and indirectly, cGMP. In Thermobifida fusca (strain YX), this protein is Guanylate kinase.